We begin with the raw amino-acid sequence, 316 residues long: Ribosomal RNA small subunit methyltransferase H (316 aa).

S-adenosyl-L-methionine contacts are provided by residues Gly-35–His-37, Asp-55, Phe-79, Asp-101, and Gln-108.

Belongs to the methyltransferase superfamily. RsmH family.

Its subcellular location is the cytoplasm. The enzyme catalyses cytidine(1402) in 16S rRNA + S-adenosyl-L-methionine = N(4)-methylcytidine(1402) in 16S rRNA + S-adenosyl-L-homocysteine + H(+). Functionally, specifically methylates the N4 position of cytidine in position 1402 (C1402) of 16S rRNA. The protein is Ribosomal RNA small subunit methyltransferase H of Aliivibrio fischeri (strain MJ11) (Vibrio fischeri).